The primary structure comprises 600 residues: DNA mismatch repair protein MutL (600 aa).

This sequence belongs to the DNA mismatch repair MutL/HexB family.

This protein is involved in the repair of mismatches in DNA. It is required for dam-dependent methyl-directed DNA mismatch repair. May act as a 'molecular matchmaker', a protein that promotes the formation of a stable complex between two or more DNA-binding proteins in an ATP-dependent manner without itself being part of a final effector complex. This Rickettsia typhi (strain ATCC VR-144 / Wilmington) protein is DNA mismatch repair protein MutL.